A 467-amino-acid chain; its full sequence is Cysteine--tRNA ligase (467 aa).

Cysteine 27 contacts Zn(2+). Residues alanine 29 to histidine 39 carry the 'HIGH' region motif. The Zn(2+) site is built by cysteine 209, histidine 234, and glutamate 238. Positions lysine 265–serine 269 match the 'KMSKS' region motif. Position 268 (lysine 268) interacts with ATP.

The protein belongs to the class-I aminoacyl-tRNA synthetase family. In terms of assembly, monomer. Zn(2+) serves as cofactor.

The protein resides in the cytoplasm. It catalyses the reaction tRNA(Cys) + L-cysteine + ATP = L-cysteinyl-tRNA(Cys) + AMP + diphosphate. The sequence is that of Cysteine--tRNA ligase from Mycolicibacterium gilvum (strain PYR-GCK) (Mycobacterium gilvum (strain PYR-GCK)).